Consider the following 225-residue polypeptide: Putative amino-acid transporter YggA (225 aa).

Helical transmembrane passes span 1–21 (MFAT…PIGA), 37–57 (LLTA…GVFG), 65–85 (SPIG…WFGI), 116–136 (LGVT…LGSF), and 150–170 (AVAM…AVVL).

Belongs to the LysE/ArgO transporter (TC 2.A.75) family.

It localises to the cell membrane. The protein is Putative amino-acid transporter YggA of Aeromonas hydrophila.